The following is a 247-amino-acid chain: UPF0246 protein LSL_1719 (247 aa).

It belongs to the UPF0246 family.

The chain is UPF0246 protein LSL_1719 from Ligilactobacillus salivarius (strain UCC118) (Lactobacillus salivarius).